We begin with the raw amino-acid sequence, 334 residues long: MKNRVISLLMASLLLVLSVIVAPFYKAEAATVVNTPFVAVFSNFDSSQWEKADWANGSVFNCVWKPSQVTFSNGKMILTLDREYGGSYPYKSGEYRSKSFFGYGYYEVRMKAAKNVGIVSSFFTYTGPSDNNPWDEIDIEFLGKDTTKAQFNWYKNEVGGNEYLHNLGFDASQDFHTYGFEWRPDYIDFYVDGKKVYRGTRNIPVTPGKIMMNLWPGKGVDEWLGRYDGRTPLQAEYEYVKYYPNGVPQDNPTPTPTIAPSTPTNPNLPLKGDVNGDGHVNSSDYSLFKRYLLRVIDRFPVGDQSVADVNRDGRIDSTDLTMLKRYLIRAIPSL.

The N-terminal stretch at 1–27 is a signal peptide; it reads MKNRVISLLMASLLLVLSVIVAPFYKA. The GH16 domain maps to 28-248; sequence EAATVVNTPF…YVKYYPNGVP (221 aa). The active-site Nucleophile is Glu136. The active-site Proton donor is Glu140. The disordered stretch occupies residues 246–265; it reads GVPQDNPTPTPTIAPSTPTN. The Dockerin domain occupies 267 to 334; the sequence is NLPLKGDVNG…RYLIRAIPSL (68 aa).

This sequence belongs to the glycosyl hydrolase 16 family.

It carries out the reaction Hydrolysis of (1-&gt;4)-beta-D-glucosidic linkages in beta-D-glucans containing (1-&gt;3)- and (1-&gt;4)-bonds.. This is Beta-glucanase (licB) from Acetivibrio thermocellus (Hungateiclostridium thermocellum).